Reading from the N-terminus, the 319-residue chain is Transcription factor jun-1 (319 aa).

Disordered stretches follow at residues 1–52 (MEED…EKES) and 216–264 (NGVN…CRQK). The segment covering 8-19 (PPSSSTSSESPE) has biased composition (low complexity). Over residues 28–38 (PTRRRKNSKKD) the composition is skewed to basic residues. Residues 244-285 (KKKLERKRARNRQAATKCRQKKMDRIKELEEQVLHEKHRGQR) form a basic motif region. The bZIP domain maps to 244–307 (KKKLERKRAR…EHFRRTVEHH (64 aa)). The segment at 286 to 293 (LDAELLEL) is leucine-zipper.

The protein belongs to the bZIP family. Jun subfamily. As to quaternary structure, heterodimer; with fos-1. In terms of tissue distribution, isoform a, isoform b, isoform c and isoform d are expressed in the spermatheca.

It is found in the nucleus. Its function is as follows. Transcription factor that recognizes and binds to the AP-1 non-canonical enhancer heptamer motif 5'-TTAGTCA-3'. Required for ovulation. Controls plc-1 expression in the spermatheca to regulate spermathecal valve dilation. The chain is Transcription factor jun-1 from Caenorhabditis elegans.